The chain runs to 409 residues: uncharacterized protein (409 aa).

In terms of domain architecture, EAL spans 1-209 (MRVFVARQPI…GHDLSTHFYS (209 aa)). The region spanning 203–392 (LSTHFYSYYE…GNQLDKEEAY (190 aa)) is the HDOD domain.

This is an uncharacterized protein from Bacillus subtilis (strain 168).